The primary structure comprises 1159 residues: RNA-directed RNA polymerase (1159 aa).

The RdRp catalytic domain maps to L545–E727.

This sequence belongs to the reoviridae RNA-directed RNA polymerase family. In terms of assembly, interacts with VP3 (Potential). Interacts with VP2 (Potential). Interacts with NSP5; this interaction is probably necessary for the formation of functional virus factories.

The protein resides in the virion. The catalysed reaction is RNA(n) + a ribonucleoside 5'-triphosphate = RNA(n+1) + diphosphate. In terms of biological role, RNA-directed RNA polymerase that is involved in both transcription and genome replication. Together with VP3 capping enzyme, forms an enzyme complex positioned near the channels situated at each of the five-fold vertices of the core. Following infection, the outermost layer of the virus is lost, leaving a double-layered particle (DLP) made up of the core and VP6 shell. VP1 then catalyzes the transcription of fully conservative plus-strand genomic RNAs that are extruded through the DLP's channels into the cytoplasm where they function as mRNAs for translation of viral proteins. One copy of each of the viral (+)RNAs is also recruited during core assembly, together with newly synthesized polymerase complexes and VP2. The polymerase of these novo-formed particles catalyzes the synthesis of complementary minus-strands leading to dsDNA formation. To do so, the polymerase specifically recognizes conserved 3' sequence(s) in plus-strand RNA templates. Once dsRNA synthesis is complete, the polymerase switches to the transcriptional mode, thus providing secondary transcription. In Homo sapiens (Human), this protein is RNA-directed RNA polymerase.